The sequence spans 859 residues: Bifunctional levopimaradiene synthase, chloroplastic (859 aa).

Residues 1 to 70 constitute a chloroplast transit peptide; it reads MALLSSSLSS…IACVGEDSLS (70 aa). Residue lysine 259 participates in substrate binding. Positions 392 and 394 each coordinate Mg(2+). Positions 392–395 match the DXDD motif motif; that stretch reads DIDD. Residue lysine 479 participates in substrate binding. Mg(2+) contacts are provided by aspartate 611, aspartate 615, asparagine 755, threonine 759, and glutamate 763. The DDXXD motif signature appears at 611 to 615; it reads DDLYD.

It belongs to the terpene synthase family. Tpsd subfamily. Mg(2+) serves as cofactor.

The protein resides in the plastid. The protein localises to the chloroplast. It catalyses the reaction (2E,6E,10E)-geranylgeranyl diphosphate = (+)-copalyl diphosphate. It carries out the reaction (+)-copalyl diphosphate = abieta-8(14),12-diene + diphosphate. The protein operates within terpene metabolism; oleoresin biosynthesis. In terms of biological role, involved in defensive oleoresin formation in conifers in response to insect attack or other injury. Involved in diterpene (C20) olefins biosynthesis. Bifunctional enzyme that catalyzes two sequential cyclizations of geranylgeranyl diphosphate (GGPP) to levopimaradiene. Levopimaradiene is the major products of the enzyme followed by abietadiene, neoabietadiene and palustradiene. In Picea abies (Norway spruce), this protein is Bifunctional levopimaradiene synthase, chloroplastic (TPS-LAS).